Consider the following 246-residue polypeptide: tRNA pseudouridine synthase A (246 aa).

Residue Asp52 is the Nucleophile of the active site. Tyr111 provides a ligand contact to substrate.

It belongs to the tRNA pseudouridine synthase TruA family. Homodimer.

It catalyses the reaction uridine(38/39/40) in tRNA = pseudouridine(38/39/40) in tRNA. In terms of biological role, formation of pseudouridine at positions 38, 39 and 40 in the anticodon stem and loop of transfer RNAs. In Borreliella afzelii (strain PKo) (Borrelia afzelii), this protein is tRNA pseudouridine synthase A.